Reading from the N-terminus, the 1186-residue chain is Partner and localizer of BRCA2 (1186 aa).

Positions 1 to 160 (MDEPPGKPLS…QKRTFISQER (160 aa)) are required for its oligomerization and is important for its focal concentration at DNA damage sites. The tract at residues 1–200 (MDEPPGKPLS…PVTEIRTHLL (200 aa)) is interaction with RAD51. Positions 1-319 (MDEPPGKPLS…SKSGQLPTSS (319 aa)) are interaction with BRCA1. The DNA-binding (with the preference D loop &gt; dsDNA &gt; ssDNA) stretch occupies residues 1-579 (MDEPPGKPLS…EDSLSWSNSA (579 aa)). A coiled-coil region spans residues 9 to 41 (LSCEEKEKLKEKLAFLKREYSKTLARLQRAQRA). 2 disordered regions span residues 52-72 (VEEQ…HSEP) and 95-157 (KTSI…TFIS). Residues 120–141 (RTDDTQEHFPHRVSDPSGEQKQ) show a composition bias toward basic and acidic residues. Over residues 143-152 (LPSRRKKQQK) the composition is skewed to basic residues. A phosphoserine mark is found at Ser-172 and Ser-190. Residues 252–273 (TLSDSGSSQHLEHIPPKGSSEL) form a disordered region. Position 285 is a phosphoserine (Ser-285). Residues 346-365 (KEQNQTEKSLKSPSDTLDGR) form a disordered region. Ser-376 and Ser-387 each carry phosphoserine. Residues 395–446 (SCTVPEGLLFPAEYYVRTTRSMSNCQRKVAVEAVIQSHLDVKKKGFKNKNKD) are chAM (Chromatin-association motif); required for chromatin association, mediates nucleosome association. The tract at residues 440 to 525 (FKNKNKDASK…RKSACTPASD (86 aa)) is disordered. At Ser-454 the chain carries Phosphoserine. Residues 467–488 (GTCTGQPSSRTSQKLLSLTKVS) are compositionally biased toward polar residues. Ser-660 bears the Phosphoserine mark. 2 disordered regions span residues 679 to 698 (PGKS…KTGL) and 774 to 798 (KQFD…QGQP). Residues 687-698 (PNSQSQHTKTGL) show a composition bias toward polar residues. The tract at residues 775-1186 (QFDSSGSPAK…DGNIFVYHYS (412 aa)) is required for interaction with POLH and POLH DNA synthesis stimulation. Ser-781 carries the post-translational modification Phosphoserine. Residues 853-1186 (GNLQLVSELK…DGNIFVYHYS (334 aa)) form an interaction with RAD51, BRCA2 and POLH region. 7 WD repeats span residues 854–915 (NLQL…WHFA), 917–961 (VPVL…QVLL), 962–1009 (KSGN…LMPP), 1010–1052 (EETI…MHID), 1058–1109 (SVCH…MLYC), 1115–1153 (AGRF…LLPP), and 1155–1186 (SDQH…YHYS).

As to quaternary structure, homooligomer; dissociated upon DNA damage thus allowing association with BRCA1. Oligomerization is essential for its focal accumulation at DNA breaks. Part of a BRCA complex containing BRCA1, BRCA2 and PALB2. Interacts with BRCA1 and this interaction is essential for its function in HRR. Interacts with RAD51AP1 and MORF4L1/MRG15. Component of the homologous recombination repair (HR) complex composed of ERCC5/XPG, BRCA2, PALB2, DSS1 and RAD51. Within the complex, interacts with ERCC5/XPG and BRCA2. Interacts with BRCA2, RAD51C, RAD51 and XRCC3; the interactions are direct and it may serve as a scaffold for a HR complex containing PALB2, BRCA2, RAD51C, RAD51 and XRCC3. Interacts with POLH; the interaction is direct.

The protein localises to the nucleus. Plays a critical role in homologous recombination repair (HRR) through its ability to recruit BRCA2 and RAD51 to DNA breaks. Strongly stimulates the DNA strand-invasion activity of RAD51, stabilizes the nucleoprotein filament against a disruptive BRC3-BRC4 polypeptide and helps RAD51 to overcome the suppressive effect of replication protein A (RPA). Functionally cooperates with RAD51AP1 in promoting of D-loop formation by RAD51. Serves as the molecular scaffold in the formation of the BRCA1-PALB2-BRCA2 complex which is essential for homologous recombination. Via its WD repeats is proposed to scaffold a HR complex containing RAD51C and BRCA2 which is thought to play a role in HR-mediated DNA repair. Essential partner of BRCA2 that promotes the localization and stability of BRCA2. Also enables its recombinational repair and checkpoint functions of BRCA2. May act by promoting stable association of BRCA2 with nuclear structures, allowing BRCA2 to escape the effects of proteasome-mediated degradation. Binds DNA with high affinity for D loop, which comprises single-stranded, double-stranded and branched DNA structures. May play a role in the extension step after strand invasion at replication-dependent DNA double-strand breaks; together with BRCA2 is involved in both POLH localization at collapsed replication forks and DNA polymerization activity. The protein is Partner and localizer of BRCA2 (PALB2) of Homo sapiens (Human).